The following is a 172-amino-acid chain: NADH-ubiquinone oxidoreductase chain 6 (172 aa).

5 helical membrane passes run 1–21, 25–45, 53–73, 86–106, and 140–160; these read MTYFMFLLLMALVVGLVAVAS, PYFAALGLVVAAGVGCGVLVG, LVLFLIYLGGMLVVFAYAALA, VLGYVLVYLLGVGLVAGIFWG, and GGMLVICAWVLLLTLLVVLEL.

This sequence belongs to the complex I subunit 6 family.

The protein resides in the mitochondrion membrane. It carries out the reaction a ubiquinone + NADH + 5 H(+)(in) = a ubiquinol + NAD(+) + 4 H(+)(out). Its function is as follows. Core subunit of the mitochondrial membrane respiratory chain NADH dehydrogenase (Complex I) that is believed to belong to the minimal assembly required for catalysis. Complex I functions in the transfer of electrons from NADH to the respiratory chain. The immediate electron acceptor for the enzyme is believed to be ubiquinone. The chain is NADH-ubiquinone oxidoreductase chain 6 (MT-ND6) from Cyprinus carpio (Common carp).